Consider the following 446-residue polypeptide: Argininosuccinate lyase (446 aa).

It belongs to the lyase 1 family. Argininosuccinate lyase subfamily.

The protein localises to the cytoplasm. The enzyme catalyses 2-(N(omega)-L-arginino)succinate = fumarate + L-arginine. Its pathway is amino-acid biosynthesis; L-arginine biosynthesis; L-arginine from L-ornithine and carbamoyl phosphate: step 3/3. In Sulfurisphaera tokodaii (strain DSM 16993 / JCM 10545 / NBRC 100140 / 7) (Sulfolobus tokodaii), this protein is Argininosuccinate lyase.